The following is a 69-amino-acid chain: Protein hunchback (69 aa).

3 consecutive C2H2-type zinc fingers follow at residues 1–11, 17–39, and 45–69; these read KHHLEYHLRNH, FKCE…LKSH, and YRCA…KYSH.

It belongs to the hunchback C2H2-type zinc-finger protein family.

The protein resides in the nucleus. Its function is as follows. Gap class segmentation protein that controls development of head structures. The chain is Protein hunchback (hb) from Apis mellifera (Honeybee).